A 511-amino-acid chain; its full sequence is Phenylalanine--tRNA ligase alpha subunit (511 aa).

Residues threonine 352, 390–392 (QVE), tyrosine 429, and phenylalanine 455 each bind L-phenylalanine.

It belongs to the class-II aminoacyl-tRNA synthetase family. Phe-tRNA synthetase alpha subunit type 2 subfamily. Tetramer of two alpha and two beta subunits. Mg(2+) serves as cofactor.

It is found in the cytoplasm. The enzyme catalyses tRNA(Phe) + L-phenylalanine + ATP = L-phenylalanyl-tRNA(Phe) + AMP + diphosphate + H(+). This Methanothermobacter thermautotrophicus (strain ATCC 29096 / DSM 1053 / JCM 10044 / NBRC 100330 / Delta H) (Methanobacterium thermoautotrophicum) protein is Phenylalanine--tRNA ligase alpha subunit.